A 36-amino-acid polypeptide reads, in one-letter code: GILSLVKVAKLAGKTFAKEGGKFGLEFIACKVTNQC.

Cys30 and Cys36 are oxidised to a cystine.

Expressed by the skin glands.

It localises to the secreted. Antimicrobial peptide. The sequence is that of Esculentin-2R from Pelophylax ridibundus (Marsh frog).